We begin with the raw amino-acid sequence, 291 residues long: MIIIEFIKGLILGIVEGLTEFAPVSSTGHMILVDDMWLKSTEFLGPHSAFTFKVVIQLGSVFAAAWVFRERYFEMLHIGKYRNSSINEEFRSKPRRLNLLHVLVGMIPAGILGVLFDDFIEAHLFSVPTVMIGLFLGAIYMIIADKYSKKVQNPKSVDQINYVQAFVIGISQAVAMWPGFSRSGSTISTGVLMKLDHKSASDFTFIMAVPIMLAASALSLVKNYQYIELAHIPFYLIGFLAAFIVGLIAIKTFLHLINKVKLVPFAIYRIVLVIIIAILYFGFGIGQGISG.

8 helical membrane-spanning segments follow: residues Met-1 to Phe-21, Ser-48 to Phe-68, Leu-100 to Ile-120, Leu-124 to Ala-144, Ile-160 to Phe-180, Ser-201 to Val-221, Ala-230 to Ile-250, and Ile-270 to Ser-290.

The protein belongs to the UppP family.

It localises to the cell membrane. It catalyses the reaction di-trans,octa-cis-undecaprenyl diphosphate + H2O = di-trans,octa-cis-undecaprenyl phosphate + phosphate + H(+). Functionally, catalyzes the dephosphorylation of undecaprenyl diphosphate (UPP). Confers resistance to bacitracin. The polypeptide is Undecaprenyl-diphosphatase (Staphylococcus haemolyticus (strain JCSC1435)).